Here is a 137-residue protein sequence, read N- to C-terminus: DNA-directed RNA polymerase subunit omega (137 aa).

Residues D78 to D137 are disordered. Over residues A84–S103 the composition is skewed to low complexity. The span at Q110 to R121 shows a compositional bias: basic and acidic residues.

This sequence belongs to the RNA polymerase subunit omega family. The RNAP catalytic core consists of 2 alpha, 1 beta, 1 beta' and 1 omega subunit. When a sigma factor is associated with the core the holoenzyme is formed, which can initiate transcription.

It carries out the reaction RNA(n) + a ribonucleoside 5'-triphosphate = RNA(n+1) + diphosphate. Its function is as follows. Promotes RNA polymerase assembly. Latches the N- and C-terminal regions of the beta' subunit thereby facilitating its interaction with the beta and alpha subunits. This Methylobacterium sp. (strain 4-46) protein is DNA-directed RNA polymerase subunit omega.